An 85-amino-acid polypeptide reads, in one-letter code: Phosphocarrier protein HPr (85 aa).

The 85-residue stretch at Met1–Glu85 folds into the HPr domain. The Pros-phosphohistidine intermediate role is filled by His15.

It belongs to the HPr family.

Its subcellular location is the cytoplasm. In terms of biological role, general (non sugar-specific) component of the phosphoenolpyruvate-dependent sugar phosphotransferase system (sugar PTS). This major carbohydrate active-transport system catalyzes the phosphorylation of incoming sugar substrates concomitantly with their translocation across the cell membrane. The phosphoryl group from phosphoenolpyruvate (PEP) is transferred to the phosphoryl carrier protein HPr by enzyme I. Phospho-HPr then transfers it to the PTS EIIA domain. This Buchnera aphidicola subsp. Acyrthosiphon pisum (strain APS) (Acyrthosiphon pisum symbiotic bacterium) protein is Phosphocarrier protein HPr (ptsH).